Consider the following 120-residue polypeptide: Autophagy-related protein 8C (120 aa).

The disordered stretch occupies residues 1 to 20 (MARSSFKLEHPLERRQAEAN). A lipid anchor (Phosphatidylethanolamine amidated glycine) is attached at glycine 117. A propeptide spans 118 to 120 (LFV) (removed in mature form).

Belongs to the ATG8 family. Interacts with ATG4. Post-translationally, the C-terminal 3 residues are removed by ATG4 to expose Gly-117 at the C-terminus. The C-terminal Gly is then amidated with phosphatidylethanolamine by an activating system similar to that for ubiquitin.

The protein resides in the cytoplasmic vesicle. The protein localises to the autophagosome membrane. It is found in the vacuole membrane. Its subcellular location is the cytoplasm. It localises to the cytoskeleton. In terms of biological role, ubiquitin-like modifier involved in autophagosomes formation. May mediate the delivery of the autophagosomes to the vacuole via the microtubule cytoskeleton. The protein is Autophagy-related protein 8C (ATG8C) of Oryza sativa subsp. indica (Rice).